The sequence spans 565 residues: Alkaline nuclease (565 aa).

It belongs to the herpesviridae alkaline nuclease family. In terms of assembly, interacts with major DNA-binding protein; this interaction increases the nuclease processivity of the alkaline exonuclease.

It is found in the host nucleus. The protein localises to the host cytoplasm. Functionally, plays a role in processing non linear or branched viral DNA intermediates in order to promote the production of mature packaged unit-length linear progeny viral DNA molecules. Exhibits endonuclease and exonuclease activities and accepts both double-stranded and single-stranded DNA as substrate. Exonuclease digestion of DNA is in the 5'-&gt; 3' direction and the products are 5'-monophosphate nucleosides. Additionally, forms a recombinase with the major DNA-binding protein, which displays strand exchange activity. The protein is Alkaline nuclease of Equus caballus (Horse).